The primary structure comprises 445 residues: Phosphoglucosamine mutase (445 aa).

Catalysis depends on Ser-102, which acts as the Phosphoserine intermediate. 4 residues coordinate Mg(2+): Ser-102, Asp-241, Asp-243, and Asp-245. A Phosphoserine modification is found at Ser-102.

It belongs to the phosphohexose mutase family. Requires Mg(2+) as cofactor. Post-translationally, activated by phosphorylation.

The catalysed reaction is alpha-D-glucosamine 1-phosphate = D-glucosamine 6-phosphate. Its function is as follows. Catalyzes the conversion of glucosamine-6-phosphate to glucosamine-1-phosphate. The chain is Phosphoglucosamine mutase from Aliivibrio fischeri (strain ATCC 700601 / ES114) (Vibrio fischeri).